The sequence spans 253 residues: Complement C1q subcomponent subunit B (253 aa).

A signal peptide spans Met1–Ala27. A Pyrrolidone carboxylic acid modification is found at Gln28. A 4-hydroxyproline mark is found at Pro35, Pro38, Pro41, Pro53, and Pro56. Collagen-like domains follow at residues Ile37–Pro86 and Gly60–Gly114. The disordered stretch occupies residues Pro38–Asp115. 5-hydroxylysine occurs at positions 59 and 62. Position 65 is a 4-hydroxyproline (Pro65). A compositionally biased stretch (basic and acidic residues) spans Asp70–Asp79. The residue at position 77 (Lys77) is a 5-hydroxylysine. The segment covering Pro80–Lys92 has biased composition (low complexity). Pro83 and Pro86 each carry 4-hydroxyproline. 5-hydroxylysine is present on residues Lys92 and Lys98. The segment covering Gly96 to Gly105 has biased composition (gly residues). Residues Pro101, Pro104, and Pro107 each carry the 4-hydroxyproline modification. Lys110 is subject to 5-hydroxylysine. The region spanning Lys117–Ala253 is the C1q domain. Cysteines 181 and 198 form a disulfide. Ca(2+) is bound by residues Asp199, Tyr200, and Gln206.

In terms of assembly, core component of the complement C1 complex, a calcium-dependent complex composed of 1 molecule of the C1Q subcomplex, 2 molecules of C1R and 2 molecules of C1S. The C1Q subcomplex is composed 18 subunits: 3 chains of C1QA, C1QB, and C1QC trimerize to form 6 collagen-like triple helices connected to six globular ligand-recognition modules (C1q domain). Hydroxylated on lysine and proline residues. Hydroxylated lysine residues can be glycosylated. Human C1Q contains up to 68.3 hydroxylysine-galactosylglucose residues and up to 2.5 hydroxylysine-galactose per molecule. Total percentage hydroxylysine residues glycosylated is 86.4%.

The protein localises to the secreted. Its subcellular location is the cell surface. With respect to regulation, the C1Q subcomplex is inhibited by sulfated molecules, such as triterpenoid sulfates, heparan sulfate, or chondroitin sulfates. In terms of biological role, core component of the complement C1 complex, a multiprotein complex that initiates the classical pathway of the complement system, a cascade of proteins that leads to phagocytosis and breakdown of pathogens and signaling that strengthens the adaptive immune system. The classical complement pathway is initiated by the C1Q subcomplex of the C1 complex, which specifically binds IgG or IgM immunoglobulins complexed with antigens, forming antigen-antibody complexes on the surface of pathogens: C1QA, together with C1QB and C1QC, specifically recognizes and binds the Fc regions of IgG or IgM via its C1q domain. Immunoglobulin-binding activates the proenzyme C1R, which cleaves C1S, initiating the proteolytic cascade of the complement system. The C1Q subcomplex is activated by a hexamer of IgG complexed with antigens, while it is activated by a pentameric IgM. The C1Q subcomplex also recognizes and binds phosphatidylserine exposed on the surface of cells undergoing programmed cell death, possibly promoting activation of the complement system. The protein is Complement C1q subcomponent subunit B of Homo sapiens (Human).